A 199-amino-acid chain; its full sequence is Type-4 uracil-DNA glycosylase (199 aa).

Residues Cys14 and Cys17 each contribute to the [4Fe-4S] cluster site. Uracil is bound by residues Gly41–Ala43, Phe55, and Asn81. A pseudo-FCL region spans residues Val77–Pro114. [4Fe-4S] cluster is bound by residues Cys85 and Cys101. Uracil is bound at residue His163.

Belongs to the uracil-DNA glycosylase (UDG) superfamily. Type 4 (UDGa) family.

The enzyme catalyses Hydrolyzes single-stranded DNA or mismatched double-stranded DNA and polynucleotides, releasing free uracil.. With respect to regulation, product-inhibited by both uracil and apurinic/apyrimidinic sites. In terms of biological role, removes uracil bases that are present in DNA as a result of either deamination of cytosine or misincorporation of dUMP instead of dTMP. Can remove uracil from double-stranded DNA containing either a U/G or U/A base pair as well as from single-stranded DNA. In Archaeoglobus fulgidus (strain ATCC 49558 / DSM 4304 / JCM 9628 / NBRC 100126 / VC-16), this protein is Type-4 uracil-DNA glycosylase.